The chain runs to 119 residues: uncharacterized protein (119 aa).

A disulfide bridge connects residues Cys9 and Cys12.

Belongs to the ArsC family.

This is an uncharacterized protein from Streptomyces viridochromogenes.